The sequence spans 397 residues: MLNNKRLFTSESVTEGHPDKIADQVSDAILDAILKDDPNARVACETTVTTGMALIAGEISTTTYVDIPKVVRETIKEIGYTRAKYGYDYETMAILTAIDEQSPDIAQGVDKALEYRDKDSEEEIEATGAGDQGLMFGYATNETETYMPLAIYLSHQLAKRLSDVRKDGTLNYLRPDGKVQVTVEYDENDNPVRIDTIVVSTQHAEDVTLEQIQEDIKAHVIYPTVPENLINEQTKFYINPTGRFVIGGPQGDAGLTGRKIIVDTYGGIARHGGGCFSGKDPTKVDRSAAYAARYVAKNIVAAGLADQCEVQLAYAIGVAEPVSIAIDTFGTGKVSEGQLVEAVRKHFDLRPAGIIKMLDLKQPIYKQTAAYGHFGRTDVLFPWEKLDKVEELKDAVK.

His17 provides a ligand contact to ATP. Asp19 is a Mg(2+) binding site. Glu45 is a binding site for K(+). Residues Glu58 and Gln101 each coordinate L-methionine. The segment at 101–111 is flexible loop; it reads QSPDIAQGVDK. Residues 176 to 178, 243 to 244, Asp252, 258 to 259, and Lys279 each bind ATP; these read DGK, RF, and RK. Asp252 contacts L-methionine. An L-methionine-binding site is contributed by Lys283.

It belongs to the AdoMet synthase family. Homotetramer; dimer of dimers. It depends on Mg(2+) as a cofactor. Requires K(+) as cofactor.

The protein localises to the cytoplasm. The catalysed reaction is L-methionine + ATP + H2O = S-adenosyl-L-methionine + phosphate + diphosphate. It functions in the pathway amino-acid biosynthesis; S-adenosyl-L-methionine biosynthesis; S-adenosyl-L-methionine from L-methionine: step 1/1. In terms of biological role, catalyzes the formation of S-adenosylmethionine (AdoMet) from methionine and ATP. The overall synthetic reaction is composed of two sequential steps, AdoMet formation and the subsequent tripolyphosphate hydrolysis which occurs prior to release of AdoMet from the enzyme. In Staphylococcus aureus, this protein is S-adenosylmethionine synthase.